We begin with the raw amino-acid sequence, 212 residues long: Probable GTP-binding protein EngB (212 aa).

The 185-residue stretch at 27–211 (GPPEIAFAGR…QAAIVLAANG (185 aa)) folds into the EngB-type G domain. Residues 35–42 (GRSNVGKS), 62–66 (GRTQE), 89–92 (DMPG), 156–159 (TKTD), and 190–192 (TSS) contribute to the GTP site. Residues serine 42 and threonine 64 each coordinate Mg(2+).

Belongs to the TRAFAC class TrmE-Era-EngA-EngB-Septin-like GTPase superfamily. EngB GTPase family. Requires Mg(2+) as cofactor.

Functionally, necessary for normal cell division and for the maintenance of normal septation. The polypeptide is Probable GTP-binding protein EngB (Mesorhizobium japonicum (strain LMG 29417 / CECT 9101 / MAFF 303099) (Mesorhizobium loti (strain MAFF 303099))).